We begin with the raw amino-acid sequence, 143 residues long: Large ribosomal subunit protein uL11 (143 aa).

The protein belongs to the universal ribosomal protein uL11 family. As to quaternary structure, part of the ribosomal stalk of the 50S ribosomal subunit. Interacts with L10 and the large rRNA to form the base of the stalk. L10 forms an elongated spine to which L12 dimers bind in a sequential fashion forming a multimeric L10(L12)X complex. In terms of processing, one or more lysine residues are methylated.

Its function is as follows. Forms part of the ribosomal stalk which helps the ribosome interact with GTP-bound translation factors. The sequence is that of Large ribosomal subunit protein uL11 from Cutibacterium acnes (strain DSM 16379 / KPA171202) (Propionibacterium acnes).